Consider the following 353-residue polypeptide: Zinc transporter 5 (353 aa).

An N-terminal signal peptide occupies residues 1-27 (MATAAMTKVFVLLFLVAACYLPAHAAA). The Extracellular portion of the chain corresponds to 28 to 48 (AECDCATDTAGRDKAQALRLK). A helical membrane pass occupies residues 49 to 69 (VIAIFCILAGSTVGAALPSLG). Residues 70-86 (GRFPAIQPETDVFLSVK) lie on the Cytoplasmic side of the membrane. The chain crosses the membrane as a helical span at residues 87 to 107 (AFAGGVILATGLVHILPAAFE). Topologically, residues 108–121 (ALSSPCLVGGPWKR) are extracellular. The helical transmembrane segment at 122-142 (FPFAGMVAMVSAIGTLIVDTV) threads the bilayer. The Cytoplasmic portion of the chain corresponds to 143-198 (ATGYFHRTDAKRKAAAVADEPADDLEASDEHSHGHAHGMSVMSVAPAGEEDLVRHR). The helical transmembrane segment at 199 to 219 (VISQVLELGVVVHSLIIGMSL) threads the bilayer. The Extracellular segment spans residues 220–230 (GASDFPSTVRP). Residues 231–251 (LVPALTFHQFFEGIGLGGCIV) form a helical membrane-spanning segment. Over 252–260 (QAKFRVRSV) the chain is Cytoplasmic. Residues 261–281 (VTMALFFSLTTPAGIVVGIGI) form a helical membrane-spanning segment. The Extracellular segment spans residues 282-292 (SSVYDANSPTA). A helical transmembrane segment spans residues 293 to 313 (LVVQGLLEAAAAGILVYMALV). Topologically, residues 314–332 (DILAEDFMKTKVQRRGRLQ) are cytoplasmic. Residues 333–353 (LAMNVALLLGAGLMSMIAIWA) traverse the membrane as a helical segment.

Belongs to the ZIP transporter (TC 2.A.5) family.

It is found in the cell membrane. Functionally, zinc transporter that mediates zinc uptake from the rhizosphere and may be responsible for the translocation of zinc within the plant. This is Zinc transporter 5 (ZIP5) from Oryza sativa subsp. japonica (Rice).